The chain runs to 382 residues: MSDKYYRSAYMNVDLNAVASNFKVFSTLHPNKTVMAVVKANAYGLGSVKVARHLMENGATFFAVATLDEAIELRMHGITAKILVLGVLPAKDIDKAIQHRVALTVPSKQWLKEAIKNISGEQEKKLWLHIKLDTGMGRLGIKDTKTYQEVIEIIQQYEQLVFEGVFTHFACADEPGDMTTEQYHRFKDMVNEAIKPEYIHCQNSAGSLLMDCQFCNAIRPGISLYGYYPSEYVQQKVKVHLKPSVQLIANVVQTKTLQAGESVSYGATYTATDPTTIALLPIGYADGYLRIMQGSFVNVNGHQCEVIGRVCMDQTIVKVPDQVKAGDSVILIDNHRESPQSVEVAAEKQHTINYEVLCNLSRRLPRIYHDGDQRFVTNELLK.

Catalysis depends on K39, which acts as the Proton acceptor; specific for D-alanine. N6-(pyridoxal phosphate)lysine is present on K39. Residue R138 participates in substrate binding. The active-site Proton acceptor; specific for L-alanine is Y265. M312 provides a ligand contact to substrate.

This sequence belongs to the alanine racemase family. Pyridoxal 5'-phosphate is required as a cofactor.

It carries out the reaction L-alanine = D-alanine. It participates in amino-acid biosynthesis; D-alanine biosynthesis; D-alanine from L-alanine: step 1/1. Catalyzes the interconversion of L-alanine and D-alanine. May also act on other amino acids. The sequence is that of Alanine racemase 1 (alr1) from Staphylococcus aureus (strain MRSA252).